The sequence spans 663 residues: MTEKANGVKSSPANNHNHHAPPAIKASGKDDHRASSRPQSAAADDTSSELQQLAEMDAPQQRRGGFRRIARLVGVLREWAYRNFREEEPRPDSFLERFRGPELHTVTTQQGDGKGDKDGEGKGTKKKFELFVLDPAGDWYYRWLFLIALPVLYNWCLLVARACFSDLQKGYYIVWLVLDYVSDVVYIADLFIRLRTGFLEQGLLVKDTKKLRDNYIHTMQFKLDVASIIPTDLIYFAVGIHNPEVRFNRLLHFARMFEFFDRTETRTSYPNIFRISNLILYILIIIHWNACIYYAISKSIGFGVDTWVYPNITDPEYGYLSREYIYCLYWSTLTLTTIGETPPPVKDEEYLFVIFDFLIGVLIFATIVGNVGSMISNMNATRAEFQAKIDAVKHYMQFRKVSKEMEAKVIRWFDYLWTNKKSVDEREVLKNLPAKLRAEIAINVHLSTLKKVRIFQDCEAGLLVELVLKLRPQVFSPGDYICRKGDIGKEMYIIKEGKLAVVADDGVTQYALLSAGSCFGEISILNIKGSKMGNRRTANIRSLGYSDLFCLSKDDLMEAVTEYPDAKRVLEERGREILMKEGLLDENEVAASMEVDVQEKLEQLETNMDTLYTRFARLLAEYTGAQQKLKQRITVLETKMKQNNEDDSLSDGMNSPEPPAEKP.

The segment at 1–61 is disordered; it reads MTEKANGVKS…QLAEMDAPQQ (61 aa). Residues 1–144 are Cytoplasmic-facing; that stretch reads MTEKANGVKS…PAGDWYYRWL (144 aa). A compositionally biased stretch (low complexity) spans 12-23; the sequence is PANNHNHHAPPA. The chain crosses the membrane as a helical span at residues 145–166; the sequence is FLIALPVLYNWCLLVARACFSD. At 167–176 the chain is on the extracellular side; the sequence is LQKGYYIVWL. The helical transmembrane segment at 177-197 threads the bilayer; sequence VLDYVSDVVYIADLFIRLRTG. Residues 198–222 are Cytoplasmic-facing; it reads FLEQGLLVKDTKKLRDNYIHTMQFK. The helical transmembrane segment at 223-241 threads the bilayer; sequence LDVASIIPTDLIYFAVGIH. Residues 242–246 lie on the Extracellular side of the membrane; sequence NPEVR. The chain crosses the membrane as a helical span at residues 247 to 265; that stretch reads FNRLLHFARMFEFFDRTET. At 266-272 the chain is on the cytoplasmic side; it reads RTSYPNI. The tract at residues 270–378 is ion conduction pathway; the sequence is PNIFRISNLI…GNVGSMISNM (109 aa). Residues 273-296 traverse the membrane as a helical segment; it reads FRISNLILYILIIIHWNACIYYAI. The Extracellular segment spans residues 297-319; that stretch reads SKSIGFGVDTWVYPNITDPEYGY. Helical transmembrane passes span 320-354 and 355-379; these read LSRE…LFVI and FDFL…SNMN. Positions 337–340 are selectivity filter; the sequence is TIGE. Positions 380 to 456 are C-linker; it reads ATRAEFQAKI…STLKKVRIFQ (77 aa). At 380–663 the chain is on the cytoplasmic side; that stretch reads ATRAEFQAKI…NSPEPPAEKP (284 aa). The tract at residues 460–580 is cyclic nucleotide-binding domain; sequence AGLLVELVLK…EERGREILMK (121 aa). 3',5'-cyclic GMP is bound by residues G520, S523, R536, and T537. R536 and T537 together coordinate 3',5'-cyclic AMP. Residues 597–651 are a coiled coil; it reads VQEKLEQLETNMDTLYTRFARLLAEYTGAQQKLKQRITVLETKMKQNNEDDSLSD. The interval 640-663 is disordered; that stretch reads MKQNNEDDSLSDGMNSPEPPAEKP.

It belongs to the cyclic nucleotide-gated cation channel (TC 1.A.1.5) family. CNGA2 subfamily. In terms of assembly, the olfactory cyclic nucleotide-gated channel is an heterotetramer composed of CNGA2, CNGA4 and CNGB1b subunits with 2:1:1 stoichiometry. As to expression, olfactory neurons.

It localises to the cell projection. It is found in the cilium membrane. It catalyses the reaction Ca(2+)(in) = Ca(2+)(out). It carries out the reaction Na(+)(in) = Na(+)(out). The enzyme catalyses K(+)(in) = K(+)(out). The catalysed reaction is NH4(+)(in) = NH4(+)(out). It catalyses the reaction Rb(+)(in) = Rb(+)(out). It carries out the reaction Li(+)(in) = Li(+)(out). The enzyme catalyses Cs(+)(in) = Cs(+)(out). In terms of biological role, pore-forming subunit of the olfactory cyclic nucleotide-gated channel. Operates in the cilia of olfactory sensory neurons where chemical stimulation of the odorant is converted to an electrical signal. Mediates odorant-induced cAMP-dependent Ca(2+) influx triggering neuron depolarization. The rise of intracellular Ca(2+) levels potentiates the olfactory response by activating Ca(2+)-dependent Cl(-) channels, but it also serves as a negative feedback signal to desensitize the channel for rapid adaptation to odorants. Conducts cAMP- and cGMP-gated ion currents, with permeability for monovalent and divalent cations. The sequence is that of Cyclic nucleotide-gated channel alpha-2 from Bos taurus (Bovine).